Here is a 75-residue protein sequence, read N- to C-terminus: Large ribosomal subunit protein bL31 (75 aa).

The protein belongs to the bacterial ribosomal protein bL31 family. Type A subfamily. Part of the 50S ribosomal subunit.

Functionally, binds the 23S rRNA. The sequence is that of Large ribosomal subunit protein bL31 from Bradyrhizobium diazoefficiens (strain JCM 10833 / BCRC 13528 / IAM 13628 / NBRC 14792 / USDA 110).